The chain runs to 364 residues: tRNA/tmRNA (uracil-C(5))-methyltransferase (364 aa).

S-adenosyl-L-methionine is bound by residues glutamine 188, tyrosine 216, asparagine 221, glutamate 237, and aspartate 297. Cysteine 322 (nucleophile) is an active-site residue. Glutamate 356 serves as the catalytic Proton acceptor.

This sequence belongs to the class I-like SAM-binding methyltransferase superfamily. RNA M5U methyltransferase family. TrmA subfamily.

The catalysed reaction is uridine(54) in tRNA + S-adenosyl-L-methionine = 5-methyluridine(54) in tRNA + S-adenosyl-L-homocysteine + H(+). It catalyses the reaction uridine(341) in tmRNA + S-adenosyl-L-methionine = 5-methyluridine(341) in tmRNA + S-adenosyl-L-homocysteine + H(+). In terms of biological role, dual-specificity methyltransferase that catalyzes the formation of 5-methyluridine at position 54 (m5U54) in all tRNAs, and that of position 341 (m5U341) in tmRNA (transfer-mRNA). This chain is tRNA/tmRNA (uracil-C(5))-methyltransferase, found in Teredinibacter turnerae (strain ATCC 39867 / T7901).